Reading from the N-terminus, the 185-residue chain is Capsid protein (185 aa).

Residues 136 to 185 (NAPILSTLPETTVVRRRDRGRSPRRRTPSPRRRRSQSPRRRRSQSRESQC) are disordered. Residues 149 to 178 (VRRRDRGRSPRRRTPSPRRRRSQSPRRRRS) are compositionally biased toward basic residues. S157, S164, and S172 each carry phosphoserine; by host. The stretch at 157–163 (SPRRRTP) is one 1; half-length repeat. The segment at 157–179 (SPRRRTPSPRRRRSQSPRRRRSQ) is 3 X 8 AA repeats of S-P-R-R-R-[PR]-S-Q. The Bipartite nuclear localization signal signature appears at 160-177 (RRTPSPRRRRSQSPRRRR). Repeat copies occupy residues 164–171 (SPRRRRSQ) and 172–179 (SPRRRRSQ). Residues 179 to 185 (QSRESQC) form an RNA binding region.

This sequence belongs to the orthohepadnavirus core antigen family. As to quaternary structure, homodimerizes, then multimerizes. Interacts with cytosol exposed regions of viral L glycoprotein present in the reticulum-to-Golgi compartment. Interacts with human FLNB. Phosphorylated form interacts with host importin alpha; this interaction depends on the exposure of the NLS, which itself depends upon genome maturation and/or phosphorylation of the capsid protein. Interacts with host NUP153. In terms of processing, phosphorylated by host SRPK1, SRPK2, and maybe protein kinase C or GAPDH. Phosphorylation is critical for pregenomic RNA packaging. Protein kinase C phosphorylation is stimulated by HBx protein and may play a role in transport of the viral genome to the nucleus at the late step during the viral replication cycle.

It localises to the virion. The protein localises to the host cytoplasm. Self assembles to form an icosahedral capsid. Most capsids appear to be large particles with an icosahedral symmetry of T=4 and consist of 240 copies of capsid protein, though a fraction forms smaller T=3 particles consisting of 180 capsid proteins. Entering capsids are transported along microtubules to the nucleus. Phosphorylation of the capsid is thought to induce exposure of nuclear localization signal in the C-terminal portion of the capsid protein that allows binding to the nuclear pore complex via the importin (karyopherin-) alpha and beta. Capsids are imported in intact form through the nuclear pore into the nuclear basket, where it probably binds NUP153. Only capsids that contain the mature viral genome can release the viral DNA and capsid protein into the nucleoplasm. Immature capsids get stuck in the basket. Capsids encapsulate the pre-genomic RNA and the P protein. Pre-genomic RNA is reverse-transcribed into DNA while the capsid is still in the cytoplasm. The capsid can then either be directed to the nucleus, providing more genomes for transcription, or bud through the endoplasmic reticulum to provide new virions. The sequence is that of Capsid protein from Hepatitis B virus genotype A1 subtype adw (isolate Philippines/pFDW294/1988) (HBV-A).